The following is a 484-amino-acid chain: Glycogen synthase (484 aa).

Lys-21 serves as a coordination point for ADP-alpha-D-glucose.

The protein belongs to the glycosyltransferase 1 family. Bacterial/plant glycogen synthase subfamily.

It carries out the reaction [(1-&gt;4)-alpha-D-glucosyl](n) + ADP-alpha-D-glucose = [(1-&gt;4)-alpha-D-glucosyl](n+1) + ADP + H(+). The protein operates within glycan biosynthesis; glycogen biosynthesis. Functionally, synthesizes alpha-1,4-glucan chains using ADP-glucose. This is Glycogen synthase from Pseudomonas syringae pv. tomato (strain ATCC BAA-871 / DC3000).